A 223-amino-acid chain; its full sequence is Killer cell lectin-like receptor subfamily B member 1B allele B (223 aa).

At 1–45 (MDTAVVYADLHLARTGEPKHKSPPSLSPDTCQCPRWHRLALKLGC) the chain is on the cytoplasmic side. An ITIM motif motif is present at residues 5 to 10 (VVYADL). Positions 31–34 (CQCP) match the LCK-binding motif motif. The helical; Signal-anchor for type II membrane protein transmembrane segment at 46–66 (ACLILLVLSVIGLGVLVLTLL) threads the bilayer. At 67–223 (QKPLIQNSPA…LKCECMCNGS (157 aa)) the chain is on the extracellular side. Residues 101-211 (HQDKCFHVSQ…CDSDNLWICQ (111 aa)) enclose the C-type lectin domain. 2 disulfides stabilise this stretch: C122–C210 and C189–C202.

As to quaternary structure, homodimer; disulfide-linked. Interacts with tyrosine kinase LCK. Binds PTPN6/SHP-1 in a phosphorylation-dependent manner. Expressed in a subset of natural killer cells.

It localises to the membrane. In terms of biological role, receptor for CLEC2D/OCIL. Ligand-binding contributes to inhibition of cytotoxic natural killer (NK) cells. May mediate MHC class I-independent 'missing-self' recognition of allografts, tumor cells and virus-infected cells. The protein is Killer cell lectin-like receptor subfamily B member 1B allele B of Rattus norvegicus (Rat).